Reading from the N-terminus, the 170-residue chain is Cathelicidin antimicrobial peptide (170 aa).

Residues 1-30 form the signal peptide; that stretch reads MKTQMDGHSLGRWSLVLLLLGLVMPLAIVA. Residues 31-131 constitute a propeptide, cathelin-like domain (CLD); that stretch reads QVLSYKEAVL…DISCDKDNRR (101 aa). Intrachain disulfides connect cysteine 86/cysteine 97 and cysteine 108/cysteine 125. The segment at 150 to 162 is active core; it reads FKRIVQRIKDFLR.

This sequence belongs to the cathelicidin family. In terms of assembly, monomer, homodimer or homotrimer (in vitro). Oligomerizes as tetra- or hexamer in solution (in vitro). Post-translationally, proteolytically cleaved by proteinase PRTN3 into antibacterial peptide LL-37. Proteolytically cleaved by cathepsin CTSG and neutrophil elastase ELANE. Resistant to proteolytic degradation in solution, and when bound to both zwitterionic (mimicking mammalian membranes) and negatively charged membranes (mimicking bacterial membranes). In terms of processing, after secretion onto the skin surface, the CAMP gene product is processed by a serine protease-dependent mechanism into multiple novel antimicrobial peptides distinct from and shorter than cathelicidin LL-37. These peptides show enhanced antimicrobial action, acquiring the ability to kill skin pathogens such as S.aureus, E.coli and C.albicans. These peptides have lost the ability to stimulate CXCL8/IL8 release from keratinocytes. The peptides act synergistically, killing bacteria at lower concentrations when present together, and maintain activity at increased salt condition.

The protein resides in the secreted. The protein localises to the vesicle. Its function is as follows. Antimicrobial protein that is an integral component of the innate immune system. Binds to bacterial lipopolysaccharides (LPS). Acts via neutrophil N-formyl peptide receptors to enhance the release of CXCL2. Postsecretory processing generates multiple cathelicidin antimicrobial peptides with various lengths which act as a topical antimicrobial defense in sweat on skin. The unprocessed precursor form, cathelicidin antimicrobial peptide, inhibits the growth of Gram-negative E.coli and E.aerogenes with efficiencies comparable to that of the mature peptide LL-37 (in vitro). Antimicrobial peptide that is an integral component of the innate immune system. Binds to bacterial lipopolysaccharides (LPS). Causes membrane permeabilization by forming transmembrane pores (in vitro). Causes lysis of E.coli. Exhibits antimicrobial activity against Gram-negative bacteria such as P.aeruginosa, S.typhimurium, E.aerogenes, E.coli and P.syringae, Gram-positive bacteria such as L.monocytogenes, S.epidermidis, S.pyogenes and S.aureus, as well as vancomycin-resistant enterococci (in vitro). Exhibits antimicrobial activity against methicillin-resistant S.aureus, P.mirabilis, and C.albicans in low-salt media, but not in media containing 100 mM NaCl (in vitro). Forms chiral supramolecular assemblies with quinolone signal (PQS) molecules of P.aeruginosa, which may lead to interference of bacterial quorum signaling and perturbance of bacterial biofilm formation. May form supramolecular fiber-like assemblies on bacterial membranes. Induces cytokine and chemokine producation as well as TNF/TNFA and CSF2/GMCSF production in normal human keratinocytes. Exhibits hemolytic activity against red blood cells. In terms of biological role, exhibits antimicrobial activity against E.coli and B.megaterium (in vitro). In Pongo pygmaeus (Bornean orangutan), this protein is Cathelicidin antimicrobial peptide.